Reading from the N-terminus, the 371-residue chain is Carbamoyl phosphate synthase small chain (371 aa).

The interval 1–190 is CPSase; that stretch reads MRKTAILALE…LYRENEKPLV (190 aa). L-glutamine contacts are provided by serine 47, glycine 237, and glycine 239. The 183-residue stretch at 189-371 folds into the Glutamine amidotransferase type-1 domain; sequence LVAVIDFGVK…FKEFVKMAQG (183 aa). Cysteine 264 (nucleophile) is an active-site residue. 4 residues coordinate L-glutamine: leucine 265, glutamine 268, asparagine 306, and phenylalanine 309. Residues histidine 348 and glutamate 350 contribute to the active site.

This sequence belongs to the CarA family. As to quaternary structure, composed of two chains; the small (or glutamine) chain promotes the hydrolysis of glutamine to ammonia, which is used by the large (or ammonia) chain to synthesize carbamoyl phosphate. Tetramer of heterodimers (alpha,beta)4.

It carries out the reaction hydrogencarbonate + L-glutamine + 2 ATP + H2O = carbamoyl phosphate + L-glutamate + 2 ADP + phosphate + 2 H(+). The catalysed reaction is L-glutamine + H2O = L-glutamate + NH4(+). It functions in the pathway amino-acid biosynthesis; L-arginine biosynthesis; carbamoyl phosphate from bicarbonate: step 1/1. Its pathway is pyrimidine metabolism; UMP biosynthesis via de novo pathway; (S)-dihydroorotate from bicarbonate: step 1/3. Small subunit of the glutamine-dependent carbamoyl phosphate synthetase (CPSase). CPSase catalyzes the formation of carbamoyl phosphate from the ammonia moiety of glutamine, carbonate, and phosphate donated by ATP, constituting the first step of 2 biosynthetic pathways, one leading to arginine and/or urea and the other to pyrimidine nucleotides. The small subunit (glutamine amidotransferase) binds and cleaves glutamine to supply the large subunit with the substrate ammonia. The chain is Carbamoyl phosphate synthase small chain from Aquifex aeolicus (strain VF5).